Reading from the N-terminus, the 389-residue chain is Type II methyltransferase M2.BsuMI (389 aa).

Residues 1 to 299 (MKVVSLFSGI…ENLSQPKGSI (299 aa)) enclose the SAM-dependent MTase C5-type domain. Cys-69 is a catalytic residue.

Belongs to the class I-like SAM-binding methyltransferase superfamily. C5-methyltransferase family. In terms of assembly, monomer. May form a complex with YdiP, also seems to be active alone.

It catalyses the reaction a 2'-deoxycytidine in DNA + S-adenosyl-L-methionine = a 5-methyl-2'-deoxycytidine in DNA + S-adenosyl-L-homocysteine + H(+). With respect to regulation, somewhat inhibited by MgCl(2) and spermidine, strongly inhibited by MnCl(2). A methylase, recognizes the double-stranded sequence 5'-YTCGAR-3', methylates C-3 on both strands, and protects the DNA from cleavage by the BsuMI endonuclease. The polypeptide is Type II methyltransferase M2.BsuMI (ydiP) (Bacillus subtilis (strain 168)).